The following is a 392-amino-acid chain: Bifunctional enzyme Fae/Hps (392 aa).

The formaldehyde-activating enzyme stretch occupies residues methionine 1–isoleucine 161. The active-site Proton donor is histidine 17. Residues aspartate 19, leucine 48, lysine 66, threonine 68, and glutamine 83 each coordinate substrate. The interval methionine 162 to phenylalanine 392 is 3-hexulose-6-phosphate synthase.

It in the N-terminal section; belongs to the formaldehyde-activating enzyme family. This sequence in the C-terminal section; belongs to the HPS/KGPDC family. HPS subfamily.

It carries out the reaction 5,6,7,8-tetrahydromethanopterin + formaldehyde = 5,10-methylenetetrahydromethanopterin + H2O. The enzyme catalyses D-ribulose 5-phosphate + formaldehyde = D-arabino-hex-3-ulose 6-phosphate. It functions in the pathway carbohydrate biosynthesis; D-ribose 5-phosphate biosynthesis. Catalyzes the condensation of formaldehyde with tetrahydromethanopterin (H(4)MPT) to 5,10-methylenetetrahydromethanopterin. Its function is as follows. Catalyzes the reversible formation of ribulose-5-phosphate and formaldehyde from 3-hexulose-6-phosphate. This Methanosarcina barkeri (strain Fusaro / DSM 804) protein is Bifunctional enzyme Fae/Hps.